Consider the following 375-residue polypeptide: Phosphoribulokinase, chloroplastic (375 aa).

A chloroplast-targeting transit peptide spans 1–31 (MAFTMRAPAPRATAQSRVTANRARRSLVVRA). The cysteines at positions 47 and 86 are disulfide-linked.

Belongs to the phosphoribulokinase family. Component of a complex that contains two dimers of PRK, two tetramers of GAPDH and CP12.

The protein localises to the plastid. It localises to the chloroplast. The enzyme catalyses D-ribulose 5-phosphate + ATP = D-ribulose 1,5-bisphosphate + ADP + H(+). It participates in carbohydrate biosynthesis; Calvin cycle. Light regulated via thioredoxin by reversible oxidation/reduction of sulfhydryl/disulfide groups. This chain is Phosphoribulokinase, chloroplastic (PRKA), found in Chlamydomonas reinhardtii (Chlamydomonas smithii).